We begin with the raw amino-acid sequence, 359 residues long: Bergaptol O-methyltransferase (359 aa).

H126 contributes to the bergaptol binding site. S-adenosyl-L-homocysteine is bound by residues S179, G203, D226, D246, and K260. Bergaptol is bound at residue H264. Catalysis depends on H264, which acts as the Proton acceptor.

The protein belongs to the class I-like SAM-binding methyltransferase superfamily. Cation-independent O-methyltransferase family. COMT subfamily.

The enzyme catalyses a 5-hydroxyfurocoumarin + S-adenosyl-L-methionine = a 5-methoxyfurocoumarin + S-adenosyl-L-homocysteine + H(+). The catalysed reaction is bergaptol + S-adenosyl-L-methionine = bergapten + S-adenosyl-L-homocysteine. Inhibited by Cu(2+), Ni(2+) and Co(2+). This is Bergaptol O-methyltransferase from Glehnia littoralis (Beach silvertop).